A 193-amino-acid polypeptide reads, in one-letter code: MEPFRIHKGTAAVLMNDNIDTDQIIPKQYLKRIERTGFGKFLFDEWRYDNNRQENPNFPLNAPDRKGASILITGDNFGCGSSREHAPWALADYGFRVIIAGGFADIFYMNCMKNGMLPIVMDKEMREKLVKTDAREQIEVDLENEVITTSTHRFHFTIEKMWKEKLLNGLDEISITMQYEQEIKEYERRVAVY.

This sequence belongs to the LeuD family. LeuD type 1 subfamily. Heterodimer of LeuC and LeuD.

The enzyme catalyses (2R,3S)-3-isopropylmalate = (2S)-2-isopropylmalate. It participates in amino-acid biosynthesis; L-leucine biosynthesis; L-leucine from 3-methyl-2-oxobutanoate: step 2/4. Functionally, catalyzes the isomerization between 2-isopropylmalate and 3-isopropylmalate, via the formation of 2-isopropylmaleate. This is 3-isopropylmalate dehydratase small subunit from Bacillus thuringiensis subsp. konkukian (strain 97-27).